The following is a 643-amino-acid chain: Threonine--tRNA ligase (643 aa).

A TGS domain is found at 1-61; the sequence is MVAISLPDGS…TTDASVSLIT (61 aa). The interval 243–534 is catalytic; sequence DHRRVGQEMD…LIENCAGRFP (292 aa). Residues C334, H385, and H511 each contribute to the Zn(2+) site.

It belongs to the class-II aminoacyl-tRNA synthetase family. As to quaternary structure, homodimer. It depends on Zn(2+) as a cofactor.

It is found in the cytoplasm. It carries out the reaction tRNA(Thr) + L-threonine + ATP = L-threonyl-tRNA(Thr) + AMP + diphosphate + H(+). Functionally, catalyzes the attachment of threonine to tRNA(Thr) in a two-step reaction: L-threonine is first activated by ATP to form Thr-AMP and then transferred to the acceptor end of tRNA(Thr). Also edits incorrectly charged L-seryl-tRNA(Thr). In Rhodospirillum rubrum (strain ATCC 11170 / ATH 1.1.1 / DSM 467 / LMG 4362 / NCIMB 8255 / S1), this protein is Threonine--tRNA ligase.